Consider the following 146-residue polypeptide: Bradykinin-like neuropeptide (146 aa).

The first 24 residues, M1–S24, serve as a signal peptide directing secretion. 2 consecutive propeptides follow at residues L25–A80 and L92–G146.

In terms of tissue distribution, neuron L5.

It is found in the secreted. May have important functions in renal physiology and in animal behavior, as does bradykinin. The polypeptide is Bradykinin-like neuropeptide (LUQ-1) (Aplysia californica (California sea hare)).